We begin with the raw amino-acid sequence, 96 residues long: Pro-glucagon (96 aa).

Composition is skewed to basic and acidic residues over residues 1-12 (LQDAEDSSRFDA) and 19-30 (EARELSTPKXHS). The disordered stretch occupies residues 1–35 (LQDAEDSSRFDADDTLAGEARELSTPKXHSEGTFS).

It belongs to the glucagon family.

It localises to the secreted. In terms of biological role, plays a key role in glucose metabolism and homeostasis. Regulates blood glucose by increasing gluconeogenesis and decreasing glycolysis. This is Pro-glucagon (gcg) from Myoxocephalus scorpius (Shorthorn sculpin).